The chain runs to 114 residues: UPF0102 protein HPSH_02690 (114 aa).

The protein belongs to the UPF0102 family.

This is UPF0102 protein HPSH_02690 from Helicobacter pylori (strain Shi470).